Reading from the N-terminus, the 469-residue chain is MAEFPFEISPMFEGERVRKEGMFVELGGPKSLGLELVRAADMDAIEDDKVTIIGPDLKDMEEGKTYPWAMIFNIGGELVEPDLESVVERRVHDFINYCQGIMHLNQRYDVWMRVSKDTAAKMDSFEPFGKAVMMLFKTELPFIEKMQVTFYTDKDEVEKQMETAKEIFKARDARTKDLHDEDVEVFYGCTLCQSFAPTNVCVVSPDRISLCGAINWFDGRAAAKVDPEGPQFEIAKGDLLDAVTGEYTGVNEIAKKLSSGEFDKIKLHSFFDSPHTSCGCFEVVGFYIPEVDGIGWVDREYQGMAPNGIGFSTMAGQTGGGKQIVGFLGIGVNYFYSPKFIQADGGWNRVVWLPSKLKEKIDEAIPADLKDKIATENDASDIESLKAFLQEKNHPVVATWAAAEEEEEEEEEEEEVAVAAAPMMMPAAGFQMPAMPMMSGGSSGGIKLTFKNAKITIDRMIISEKKEKK.

Residues Cys189, Cys192, Cys278, and Cys280 each contribute to the [Ni-Fe-S] cluster site.

Belongs to the CdhC family. Monomer. The ACDS complex is made up of alpha, epsilon, beta, gamma and delta chains with a probable stoichiometry of (alpha(2)epsilon(2))(4)-beta(8)-(gamma(1)delta(1))(8) (Potential). [Ni-Fe-S] cluster serves as cofactor.

The enzyme catalyses Co(I)-[corrinoid Fe-S protein] + acetyl-CoA + H(+) = methyl-Co(III)-[corrinoid Fe-S protein] + CO + CoA. The protein operates within one-carbon metabolism; methanogenesis from acetate. In terms of biological role, part of a complex that catalyzes the reversible cleavage of acetyl-CoA, allowing growth on acetate as sole source of carbon and energy. The alpha-epsilon complex generates CO from CO(2), while the beta subunit (this protein) combines the CO with CoA and a methyl group to form acetyl-CoA. The methyl group, which is incorporated into acetyl-CoA, is transferred to the beta subunit by a corrinoid iron-sulfur protein (the gamma-delta complex). The protein is Acetyl-CoA decarbonylase/synthase complex subunit beta 1 (cdhC1) of Methanosarcina mazei (strain ATCC BAA-159 / DSM 3647 / Goe1 / Go1 / JCM 11833 / OCM 88) (Methanosarcina frisia).